A 296-amino-acid chain; its full sequence is Glycine--tRNA ligase alpha subunit (296 aa).

It belongs to the class-II aminoacyl-tRNA synthetase family. Tetramer of two alpha and two beta subunits.

It localises to the cytoplasm. The enzyme catalyses tRNA(Gly) + glycine + ATP = glycyl-tRNA(Gly) + AMP + diphosphate. The chain is Glycine--tRNA ligase alpha subunit from Desulfitobacterium hafniense (strain DSM 10664 / DCB-2).